The chain runs to 445 residues: Phosphoglucosamine mutase (445 aa).

Residue serine 102 is the Phosphoserine intermediate of the active site. Residues serine 102, aspartate 241, aspartate 243, and aspartate 245 each contribute to the Mg(2+) site. The residue at position 102 (serine 102) is a Phosphoserine.

Belongs to the phosphohexose mutase family. Mg(2+) serves as cofactor. In terms of processing, activated by phosphorylation.

It catalyses the reaction alpha-D-glucosamine 1-phosphate = D-glucosamine 6-phosphate. Catalyzes the conversion of glucosamine-6-phosphate to glucosamine-1-phosphate. The sequence is that of Phosphoglucosamine mutase from Acinetobacter baumannii (strain SDF).